A 144-amino-acid chain; its full sequence is Ribonuclease H (144 aa).

Residues 1 to 141 (MDKIDIYSDG…ADALANRGVE (141 aa)) form the RNase H type-1 domain. Mg(2+) contacts are provided by Asp9, Glu47, Asp69, and Asp133.

The protein belongs to the RNase H family. In terms of assembly, monomer. Mg(2+) is required as a cofactor.

The protein localises to the cytoplasm. The enzyme catalyses Endonucleolytic cleavage to 5'-phosphomonoester.. Endonuclease that specifically degrades the RNA of RNA-DNA hybrids. In Janthinobacterium sp. (strain Marseille) (Minibacterium massiliensis), this protein is Ribonuclease H.